We begin with the raw amino-acid sequence, 201 residues long: dTTP/UTP pyrophosphatase (201 aa).

The Proton acceptor role is filled by D73.

This sequence belongs to the Maf family. YhdE subfamily. A divalent metal cation is required as a cofactor.

Its subcellular location is the cytoplasm. It carries out the reaction dTTP + H2O = dTMP + diphosphate + H(+). It catalyses the reaction UTP + H2O = UMP + diphosphate + H(+). Nucleoside triphosphate pyrophosphatase that hydrolyzes dTTP and UTP. May have a dual role in cell division arrest and in preventing the incorporation of modified nucleotides into cellular nucleic acids. This chain is dTTP/UTP pyrophosphatase, found in Pseudomonas aeruginosa (strain ATCC 15692 / DSM 22644 / CIP 104116 / JCM 14847 / LMG 12228 / 1C / PRS 101 / PAO1).